The sequence spans 141 residues: Nucleoside diphosphate kinase (141 aa).

The ATP site is built by Lys-9, Phe-57, Arg-85, Thr-91, Arg-102, and Asn-112. His-115 functions as the Pros-phosphohistidine intermediate in the catalytic mechanism.

It belongs to the NDK family. Homotetramer. Requires Mg(2+) as cofactor.

It is found in the cytoplasm. The catalysed reaction is a 2'-deoxyribonucleoside 5'-diphosphate + ATP = a 2'-deoxyribonucleoside 5'-triphosphate + ADP. It catalyses the reaction a ribonucleoside 5'-diphosphate + ATP = a ribonucleoside 5'-triphosphate + ADP. Its function is as follows. Major role in the synthesis of nucleoside triphosphates other than ATP. The ATP gamma phosphate is transferred to the NDP beta phosphate via a ping-pong mechanism, using a phosphorylated active-site intermediate. The protein is Nucleoside diphosphate kinase of Prosthecochloris aestuarii (strain DSM 271 / SK 413).